The primary structure comprises 480 residues: Endoplasmic reticulum lectin 1 (480 aa).

An N-terminal signal peptide occupies residues 1–27; that stretch reads MRRSDRFPCAGASLLVVLCGVFPSSFG. MRH domains are found at residues 108–245 and 339–466; these read SSCS…LCNH and SYCF…ICKI. Cysteine 110 and cysteine 123 form a disulfide bridge. The interval 152–172 is disordered; it reads VKKSPSEAGENQEDKERTEGH. Basic and acidic residues predominate over residues 163 to 172; it reads QEDKERTEGH. 5 disulfide bridges follow: cysteine 198–cysteine 231, cysteine 214–cysteine 243, cysteine 341–cysteine 354, cysteine 418–cysteine 452, and cysteine 433–cysteine 464.

Its subcellular location is the endoplasmic reticulum lumen. Functionally, probable lectin that binds selectively to improperly folded lumenal proteins. May function in endoplasmic reticulum quality control and endoplasmic reticulum-associated degradation (ERAD) of both non-glycosylated proteins and glycoproteins. In Xenopus laevis (African clawed frog), this protein is Endoplasmic reticulum lectin 1 (erlec1).